The following is a 91-amino-acid chain: Large ribosomal subunit protein uL23c (91 aa).

The protein belongs to the universal ribosomal protein uL23 family. As to quaternary structure, part of the 50S ribosomal subunit.

The protein localises to the plastid. Its subcellular location is the chloroplast. Binds to 23S rRNA. This chain is Large ribosomal subunit protein uL23c (rpl23), found in Anthoceros angustus (Hornwort).